A 460-amino-acid chain; its full sequence is Argininosuccinate lyase (460 aa).

This sequence belongs to the lyase 1 family. Argininosuccinate lyase subfamily.

It localises to the cytoplasm. The catalysed reaction is 2-(N(omega)-L-arginino)succinate = fumarate + L-arginine. The protein operates within amino-acid biosynthesis; L-arginine biosynthesis; L-arginine from L-ornithine and carbamoyl phosphate: step 3/3. The protein is Argininosuccinate lyase of Streptococcus sanguinis (strain SK36).